A 230-amino-acid polypeptide reads, in one-letter code: Uracil-DNA glycosylase (230 aa).

The active-site Proton acceptor is aspartate 71.

Belongs to the uracil-DNA glycosylase (UDG) superfamily. UNG family.

The protein localises to the cytoplasm. It catalyses the reaction Hydrolyzes single-stranded DNA or mismatched double-stranded DNA and polynucleotides, releasing free uracil.. Excises uracil residues from the DNA which can arise as a result of misincorporation of dUMP residues by DNA polymerase or due to deamination of cytosine. This is Uracil-DNA glycosylase from Nocardioides sp. (strain ATCC BAA-499 / JS614).